The following is a 207-amino-acid chain: Urease accessory protein UreG (207 aa).

14–21 (GPVGSGKT) contributes to the GTP binding site.

Belongs to the SIMIBI class G3E GTPase family. UreG subfamily. In terms of assembly, homodimer. UreD, UreF and UreG form a complex that acts as a GTP-hydrolysis-dependent molecular chaperone, activating the urease apoprotein by helping to assemble the nickel containing metallocenter of UreC. The UreE protein probably delivers the nickel.

The protein resides in the cytoplasm. Its function is as follows. Facilitates the functional incorporation of the urease nickel metallocenter. This process requires GTP hydrolysis, probably effectuated by UreG. In Chelativorans sp. (strain BNC1), this protein is Urease accessory protein UreG.